Here is a 448-residue protein sequence, read N- to C-terminus: N-succinylarginine dihydrolase (448 aa).

Substrate contacts are provided by residues 20–29, Asn111, and 138–139; these read AGLLFGNEAS and HR. Glu175 is an active-site residue. Residue Arg213 coordinates substrate. The active site involves His249. Residues Asp251 and Asn360 each contribute to the substrate site. The active-site Nucleophile is Cys366.

The protein belongs to the succinylarginine dihydrolase family. In terms of assembly, homodimer.

The enzyme catalyses N(2)-succinyl-L-arginine + 2 H2O + 2 H(+) = N(2)-succinyl-L-ornithine + 2 NH4(+) + CO2. Its pathway is amino-acid degradation; L-arginine degradation via AST pathway; L-glutamate and succinate from L-arginine: step 2/5. In terms of biological role, catalyzes the hydrolysis of N(2)-succinylarginine into N(2)-succinylornithine, ammonia and CO(2). This chain is N-succinylarginine dihydrolase, found in Shigella dysenteriae serotype 1 (strain Sd197).